The following is a 164-amino-acid chain: Large ribosomal subunit protein uL10 (164 aa).

This sequence belongs to the universal ribosomal protein uL10 family. In terms of assembly, part of the ribosomal stalk of the 50S ribosomal subunit. The N-terminus interacts with L11 and the large rRNA to form the base of the stalk. The C-terminus forms an elongated spine to which L12 dimers bind in a sequential fashion forming a multimeric L10(L12)X complex.

Forms part of the ribosomal stalk, playing a central role in the interaction of the ribosome with GTP-bound translation factors. The polypeptide is Large ribosomal subunit protein uL10 (Chromobacterium violaceum (strain ATCC 12472 / DSM 30191 / JCM 1249 / CCUG 213 / NBRC 12614 / NCIMB 9131 / NCTC 9757 / MK)).